The primary structure comprises 306 residues: Putative syntaxin-131 (306 aa).

M1 is subject to N-acetylmethionine. Residues 1 to 276 (MNDLLKGSLE…AVKSQKSSRK (276 aa)) lie on the Cytoplasmic side of the membrane. A compositionally biased stretch (basic and acidic residues) spans 11–23 (FSRDRSNRSDIES). Residues 11–35 (FSRDRSNRSDIESGHGPGNSGDLGL) form a disordered region. Coiled coils occupy residues 35 to 72 (LSGF…VTKA) and 134 to 162 (KKKF…VERR). A t-SNARE coiled-coil homology domain is found at 205–267 (LAEIQERHDA…QSGNNQLTKA (63 aa)). The chain crosses the membrane as a helical; Anchor for type IV membrane protein span at residues 277–297 (WMCIAILILLIIIIITVISVL). The Vesicular segment spans residues 298–306 (KPWTQKNGA).

The protein belongs to the syntaxin family. In terms of assembly, part of the t-SNARE complex.

It localises to the membrane. Vesicle trafficking protein that functions in the secretory pathway. This chain is Putative syntaxin-131 (SYP131), found in Arabidopsis thaliana (Mouse-ear cress).